The primary structure comprises 468 residues: MFTAPGMATTQERPYSCSVCGKSFQYSAVLLRHERAHGGDKRFCCLECGERCARAADLRAHRWTHAGQTLYICSECGQSFSHSGLLDLHLGTHRRRSRTRPCRLCGRRFPHVPALLLHRARQHPPEKPHRCPLCARSFRQSALPFHLARAHPPEIITVTAPSPSTLYHCTQCPRAFHSSAGLRNHSRIHVVPSLSDPGTEAHLCGICGKSFSKSSTLTRHLQRHSGEKPFKCPECGKGFLESATLVRHQRTHTGEKPYACSDCGRCFSESSTLLRHQRSHQGERPHVCATCGKGFGQRYDLVVHQRSHTGERPFPCPQCGRGFTDRSDLTKHLRTHTGEKPYHCELCGKRFTCISNLNVHLRNHAGHKPHKCPECGKSFSVASKLALHRKTHLGERTAECTECGKFFSHGRSLSQHQRSHRRARAAAMAATTTTTVVTEVTIGPSLTLTGPTEQEKSGLLVSPFQETC.

4 consecutive C2H2-type zinc fingers follow at residues 15-37, 43-65, 71-93, and 100-123; these read YSCSVCGKSFQYSAVLLRHERAH, FCCLECGERCARAADLRAHRWTH, YICSECGQSFSHSGLLDLHLGTH, and RPCRLCGRRFPHVPALLLHRARQH. Residues 129–151 form a C2H2-type 5; degenerate zinc finger; that stretch reads HRCPLCARSFRQSALPFHLARAH. C2H2-type zinc fingers lie at residues 167–189, 202–224, 230–252, 258–280, 286–308, 314–336, 342–364, 370–392, and 398–420; these read YHCTQCPRAFHSSAGLRNHSRIH, HLCGICGKSFSKSSTLTRHLQRH, FKCPECGKGFLESATLVRHQRTH, YACSDCGRCFSESSTLLRHQRSH, HVCATCGKGFGQRYDLVVHQRSH, FPCPQCGRGFTDRSDLTKHLRTH, YHCELCGKRFTCISNLNVHLRNH, HKCPECGKSFSVASKLALHRKTH, and AECTECGKFFSHGRSLSQHQRSH.

This sequence belongs to the krueppel C2H2-type zinc-finger protein family.

The protein resides in the nucleus. Its function is as follows. May be involved in transcriptional regulation. The polypeptide is Zinc finger protein 672 (Znf672) (Mus musculus (Mouse)).